The following is a 314-amino-acid chain: DNA-directed RNA polymerase subunit alpha (314 aa).

Residues 1-228 are alpha N-terminal domain (alpha-NTD); the sequence is MIEIEKPNIE…EHLNIFVGLT (228 aa). The tract at residues 245 to 314 is alpha C-terminal domain (alpha-CTD); the sequence is KEKVLEMTIE…ELGLGLRNEE (70 aa).

Belongs to the RNA polymerase alpha chain family. In terms of assembly, homodimer. The RNAP catalytic core consists of 2 alpha, 1 beta, 1 beta' and 1 omega subunit. When a sigma factor is associated with the core the holoenzyme is formed, which can initiate transcription.

It catalyses the reaction RNA(n) + a ribonucleoside 5'-triphosphate = RNA(n+1) + diphosphate. DNA-dependent RNA polymerase catalyzes the transcription of DNA into RNA using the four ribonucleoside triphosphates as substrates. The protein is DNA-directed RNA polymerase subunit alpha of Shouchella clausii (strain KSM-K16) (Alkalihalobacillus clausii).